Here is a 207-residue protein sequence, read N- to C-terminus: MARYTDAVCRLCRREGLKLYLKGERCYTDKCAITKRNFAPGQHGTSRKKLSNYGVQLREKQKAKRFYGVLESQFRKYFDMADKQAGNTGENLLRILETRLDNLVYRLGLASSRAEARQLVVHGHFTVNGGKVDIPSYLVKAGDAVAVSEKSTNSPKFKELKENFKGTVPTWLTVDSEKLEGKVAAMPSREDIDLPISENLIVELYSK.

The S4 RNA-binding domain occupies 98–163 (TRLDNLVYRL…SPKFKELKEN (66 aa)).

It belongs to the universal ribosomal protein uS4 family. In terms of assembly, part of the 30S ribosomal subunit. Contacts protein S5. The interaction surface between S4 and S5 is involved in control of translational fidelity.

Its function is as follows. One of the primary rRNA binding proteins, it binds directly to 16S rRNA where it nucleates assembly of the body of the 30S subunit. Functionally, with S5 and S12 plays an important role in translational accuracy. The protein is Small ribosomal subunit protein uS4A of Alkaliphilus metalliredigens (strain QYMF).